A 458-amino-acid polypeptide reads, in one-letter code: Divalent metal cation transporter MntH (458 aa).

11 helical membrane-spanning segments follow: residues 38–58, 76–96, 119–139, 151–171, 180–200, 223–243, 275–295, 315–335, 370–390, 393–413, and 437–457; these read GFWK…VGYM, SLLS…AMAA, GGFL…AEII, MPLI…LLLM, AVVA…VILA, MLYL…LFLG, LTMA…LFFG, IVGA…LLAS, LMSV…EAKI, LLTF…IPLV, and FISG…LGFV.

It belongs to the NRAMP family.

The protein resides in the cell membrane. In terms of biological role, h(+)-stimulated, divalent metal cation uptake system. The chain is Divalent metal cation transporter MntH from Lacticaseibacillus casei (strain BL23) (Lactobacillus casei).